Here is a 252-residue protein sequence, read N- to C-terminus: 5-oxoprolinase subunit A (252 aa).

This sequence belongs to the LamB/PxpA family. As to quaternary structure, forms a complex composed of PxpA, PxpB and PxpC.

The enzyme catalyses 5-oxo-L-proline + ATP + 2 H2O = L-glutamate + ADP + phosphate + H(+). Functionally, catalyzes the cleavage of 5-oxoproline to form L-glutamate coupled to the hydrolysis of ATP to ADP and inorganic phosphate. In Mycobacterium avium (strain 104), this protein is 5-oxoprolinase subunit A.